Consider the following 307-residue polypeptide: Ribosomal RNA small subunit methyltransferase H (307 aa).

Residues glycine 33–tyrosine 35, aspartate 51, phenylalanine 82, aspartate 96, and glutamine 103 contribute to the S-adenosyl-L-methionine site.

It belongs to the methyltransferase superfamily. RsmH family.

The protein localises to the cytoplasm. It catalyses the reaction cytidine(1402) in 16S rRNA + S-adenosyl-L-methionine = N(4)-methylcytidine(1402) in 16S rRNA + S-adenosyl-L-homocysteine + H(+). Specifically methylates the N4 position of cytidine in position 1402 (C1402) of 16S rRNA. The sequence is that of Ribosomal RNA small subunit methyltransferase H from Rickettsia peacockii (strain Rustic).